A 102-amino-acid chain; its full sequence is Small ribosomal subunit protein uS10 (102 aa).

The protein belongs to the universal ribosomal protein uS10 family. As to quaternary structure, part of the 30S ribosomal subunit.

Functionally, involved in the binding of tRNA to the ribosomes. The protein is Small ribosomal subunit protein uS10 of Levilactobacillus brevis (strain ATCC 367 / BCRC 12310 / CIP 105137 / JCM 1170 / LMG 11437 / NCIMB 947 / NCTC 947) (Lactobacillus brevis).